The primary structure comprises 166 residues: MPFQIPDDLNRDLMPLAWMIGHWEGEGHGNTPDDGEFSFGCQVDFTDNGGDYLHYICQTFTMNPDGTPAAPLRMETGFWRPNVDTRKVDVLMAAPEGWAEVWTGNIDGAKIELVTDAVARTEEALVPYTGGQRLYGQVEGDLLWTFDRATVDAPLQPYMWARLKRS.

A GXWXGXG motif is present at residues 21 to 27; that stretch reads GHWEGEG.

The protein belongs to the nitrobindin family.

This Cutibacterium acnes (strain DSM 16379 / KPA171202) (Propionibacterium acnes) protein is Ferric nitrobindin-like protein.